The chain runs to 259 residues: MARILITGSTDGFGFEAARQLIERKHQVYLHARNQERADEVKTKLPGAAGVLIADLTTVAETRKLADEANAIGTFDAVILNAGLLYGPFRKSDLGVPASVFVNLVSPYIFAALLNPPKRLIFIASVLHHEADTSLKDIFWLERGEKEWKDFPAYCDAKFHVVLLVNAIARRFKDTSVIAVHPGYVPTKLAGQDAPGKMEDGIETYVMLAEGDYDTSLTGVYFDPKKERAQPHALTADLDKQEAVVKACEELTGIKLPSP.

Residues Arg37, Asp55, Asn81, Tyr154, Lys158, Val185, and Thr187 each coordinate NADP(+). Residue Tyr154 is the Proton donor of the active site. Lys158 serves as the catalytic Lowers pKa of active site Tyr.

It belongs to the short-chain dehydrogenases/reductases (SDR) family.

Its pathway is pigment biosynthesis. In terms of biological role, short-chain dehydrogenase; part of the gene cluster that mediates the biosynthesis of the yellow pigment chrysogine. Pyruvic acid and anthranilic acid are likely substrates for the nonribosomal peptide synthetase chry1/NRPS14, with pyruvic acid adenylated by the first A domain and anthranilic acid by the second. If pyruvic acid and anthranilic acid are merged and released from chry1/NRPS14 by hydrolysis, a subsequent amidation would lead to 2-pyruvoylaminobenzamide. This process is probably catalyzed by the amidotransferase chry2 using glutamine as amino donor. The dehydrogenase chry5 that has a terminal berberine bridge domain for C-N cyclization could catalyze the cyclization of 2-pyruvoylaminobenzamide to yield acetyl-4(3H)-quinazolidinone. A final reduction of acetyl-4(3H)-quinazolidinone catalyzed by the oxidoreductase chry4 would result in chrysogine. This Gibberella zeae (strain ATCC MYA-4620 / CBS 123657 / FGSC 9075 / NRRL 31084 / PH-1) (Wheat head blight fungus) protein is Short-chain dehydrogenase chry4.